We begin with the raw amino-acid sequence, 347 residues long: Chlorophyll a/b light-harvesting protein PcbB (347 aa).

Transmembrane regions (helical) follow at residues Gly25 to Ile45, Leu64 to Val84, Ala91 to Val111, Leu206 to Thr226, Leu247 to Val267, and Leu308 to Ile328.

Belongs to the PsbB/PsbC family. IsiA/Pcb subfamily. The antenna complex consists of chlorophylls (a and b) and chlorophyll a/b binding proteins. It depends on chlorophyll a as a cofactor. Chlorophyll b is required as a cofactor.

The protein localises to the cellular thylakoid membrane. The antenna complex functions as a light receptor, it captures and delivers excitation energy to photosystems II and I. The Prochlorales pcb genes are not related to higher plant LHCs. This is Chlorophyll a/b light-harvesting protein PcbB (pcbB) from Prochlorothrix hollandica.